Here is a 386-residue protein sequence, read N- to C-terminus: Mannitol-1-phosphate 5-dehydrogenase (386 aa).

Residue 6-17 (AIHFGGGNIGRG) participates in NAD(+) binding. Residue Lys-214 is part of the active site.

The protein belongs to the mannitol dehydrogenase family. In terms of assembly, monomer.

It carries out the reaction D-mannitol 1-phosphate + NAD(+) = beta-D-fructose 6-phosphate + NADH + H(+). Catalyzes the NAD(H)-dependent interconversion of D-fructose 6-phosphate and D-mannitol 1-phosphate in the mannitol metabolic pathway. Plays a key role in liamocins biosynthesis by providing the mannitol moity that is linked to 3,5-dihydroxydecanoic acid (provided by the HR-PKS PKS1) via ester bond formation catalyzed by the esterase EST1. The polypeptide is Mannitol-1-phosphate 5-dehydrogenase (Aureobasidium melanogenum (Aureobasidium pullulans var. melanogenum)).